A 123-amino-acid chain; its full sequence is WAP four-disulfide core domain protein 5 (123 aa).

An N-terminal signal peptide occupies residues 1–24 (MRIQSLLLLGALLAVGSQPPAAFG). 2 WAP domains span residues 27 to 73 (KGEK…CVPR) and 74 to 121 (VSVK…RDPA). Cystine bridges form between Cys-34/Cys-62, Cys-41/Cys-66, Cys-49/Cys-61, Cys-55/Cys-70, Cys-81/Cys-109, Cys-88/Cys-113, Cys-96/Cys-108, and Cys-102/Cys-117.

The protein resides in the secreted. In terms of biological role, putative acid-stable proteinase inhibitor. The sequence is that of WAP four-disulfide core domain protein 5 (WFDC5) from Saimiri boliviensis boliviensis (Bolivian squirrel monkey).